The chain runs to 170 residues: Protein-export protein SecB (170 aa).

The protein belongs to the SecB family. In terms of assembly, homotetramer, a dimer of dimers. One homotetramer interacts with 1 SecA dimer.

Its subcellular location is the cytoplasm. One of the proteins required for the normal export of preproteins out of the cell cytoplasm. It is a molecular chaperone that binds to a subset of precursor proteins, maintaining them in a translocation-competent state. It also specifically binds to its receptor SecA. The sequence is that of Protein-export protein SecB from Xanthomonas campestris pv. campestris (strain 8004).